Here is a 157-residue protein sequence, read N- to C-terminus: MPSQKPTILLLNGPNLNLLGTREPQIYGSTTLSDVQERCLALASSLDVELRHVQSNHEGALVDAIHALRRDLPLAGVVINPGAFTHTSVAIRDALLGVGAPFVELHVSNVHAREAFRHHSYLSDKAVAVICGMGVDGYAVAVEFMAKRLKAQAAAKL.

Tyrosine 27 (proton acceptor) is an active-site residue. Positions 80, 86, and 93 each coordinate substrate. The Proton donor role is filled by histidine 106. Substrate contacts are provided by residues 107-108 and arginine 117; that span reads VS.

The protein belongs to the type-II 3-dehydroquinase family. Homododecamer. Adopts a ring-like structure, composed of an arrangement of two hexameric rings stacked on top of one another.

It carries out the reaction 3-dehydroquinate = 3-dehydroshikimate + H2O. It participates in aromatic compound metabolism; 3,4-dihydroxybenzoate biosynthesis; 3,4-dihydroxybenzoate from 3-dehydroquinate: step 1/2. Functionally, is involved in the catabolism of quinate. Allows the utilization of quinate as carbon source via the beta-ketoadipate pathway. This is Catabolic 3-dehydroquinase from Pyricularia oryzae (strain 70-15 / ATCC MYA-4617 / FGSC 8958) (Rice blast fungus).